A 108-amino-acid polypeptide reads, in one-letter code: Peptidyl-prolyl cis-trans isomerase FKBP1A (108 aa).

Residues 20–108 (GQTCVVHYTG…VFDVELLKLE (89 aa)) form the PPIase FKBP-type domain. Lysine 53 carries the post-translational modification N6-acetyllysine; alternate. Lysine 53 is modified (N6-succinyllysine; alternate).

The protein belongs to the FKBP-type PPIase family. FKBP1 subfamily. Interacts with TGFBR1; prevents TGFBR1 phosphorylation by TGFBR2 and stabilizes it in the inactive conformation. Interacts with ACVR1B and SMAD7. Identified in a complex composed of RYR1, PDE4D, PKA, FKBP1A and protein phosphatase 1 (PP1). Interacts directly with RYR2 and RYR3. Interacts with GLMN; rapamycin and FK506 abolish the interaction with GLMN in a dose dependent manner. Interacts directly with RYR1.

Its subcellular location is the cytoplasm. The protein localises to the cytosol. It localises to the sarcoplasmic reticulum membrane. The enzyme catalyses [protein]-peptidylproline (omega=180) = [protein]-peptidylproline (omega=0). Inhibited by both FK506 and rapamycin. Keeps in an inactive conformation TGFBR1, the TGF-beta type I serine/threonine kinase receptor, preventing TGF-beta receptor activation in absence of ligand. Recruits SMAD7 to ACVR1B which prevents the association of SMAD2 and SMAD3 with the activin receptor complex, thereby blocking the activin signal. May modulate the RYR1 calcium channel activity. PPIases accelerate the folding of proteins. It catalyzes the cis-trans isomerization of proline imidic peptide bonds in oligopeptides. The polypeptide is Peptidyl-prolyl cis-trans isomerase FKBP1A (FKBP1A) (Homo sapiens (Human)).